Reading from the N-terminus, the 154-residue chain is MAYLSECRLRLEKGFILDGVAVSTAARAYGRSRPKLWSAIPPYNAQQDYHARSYFQSHVVPPLLRKTDQDHGGTGRDGWIVDYIHIFGQGQRYLNRRNWAGTGHSLQQVTGHDHYNADLKPIDGFNGRFGYRRNTPALRQSTSVFGEVTHFPLF.

This chain is Sperm microtubule associated protein 1, found in Homo sapiens (Human).